The following is a 733-amino-acid chain: Catalase-peroxidase (733 aa).

A disordered region spans residues 1 to 25; sequence MNEERKCPITGATHKPSAEKGRSNH. Basic and acidic residues predominate over residues 16–25; that stretch reads PSAEKGRSNH. Residues 96 to 219 constitute a cross-link (tryptophyl-tyrosyl-methioninium (Trp-Tyr) (with M-245)); that stretch reads WHSAGTYRTS…LAAVQMGLIY (124 aa). His-97 functions as the Proton acceptor in the catalytic mechanism. The tryptophyl-tyrosyl-methioninium (Tyr-Met) (with W-96) cross-link spans 219 to 245; sequence YVNPEGPNGKPDPLAAAKDIRETFARM. His-260 provides a ligand contact to heme b.

This sequence belongs to the peroxidase family. Peroxidase/catalase subfamily. In terms of assembly, homodimer or homotetramer. It depends on heme b as a cofactor. In terms of processing, formation of the three residue Trp-Tyr-Met cross-link is important for the catalase, but not the peroxidase activity of the enzyme.

The enzyme catalyses H2O2 + AH2 = A + 2 H2O. The catalysed reaction is 2 H2O2 = O2 + 2 H2O. Functionally, bifunctional enzyme with both catalase and broad-spectrum peroxidase activity. The polypeptide is Catalase-peroxidase (Chlorobium chlorochromatii (strain CaD3)).